The primary structure comprises 800 residues: Phenylalanine--tRNA ligase beta subunit (800 aa).

A tRNA-binding domain is found at 39 to 154 (TKDIKNLVVG…ESQVPGTDAL (116 aa)). Residues 408–483 (AFITPIDITA…RIYGYDDIPS (76 aa)) form the B5 domain. Positions 461, 467, 470, and 471 each coordinate Mg(2+). Positions 708-800 (PRFPGMSRDI…ALIEQGAVIR (93 aa)) constitute an FDX-ACB domain.

Belongs to the phenylalanyl-tRNA synthetase beta subunit family. Type 1 subfamily. As to quaternary structure, tetramer of two alpha and two beta subunits. Requires Mg(2+) as cofactor.

It is found in the cytoplasm. The enzyme catalyses tRNA(Phe) + L-phenylalanine + ATP = L-phenylalanyl-tRNA(Phe) + AMP + diphosphate + H(+). In Staphylococcus aureus (strain Mu50 / ATCC 700699), this protein is Phenylalanine--tRNA ligase beta subunit.